The following is a 312-amino-acid chain: MDTGNWSQVAEFIILGFPHLQGVQIYLFLLLLLIYLMTVLGNLLIFLVVCLDSRLHTPMYHFVSILSFSELGYTAATIPKMLANLLSEKKTISFSGCLLQIYFFHSLGATECYLLTAMAYDRYLAICRPLHYPTLMTPTLCAEIAIGCWLGGLAGPVVEISLISRLPFCGPNRIQHVFCDFPPVLSLACTDTSINVLVDFVINSCKILATFLLILCSYVQIICTVLRIPSAAGKRKAISTCASHFTVVLIFYGSILSMYVQLKKSYSLDYDQALAVVYSVLTPFLNPFIYSLRNKEIKEAVRRQLKRIGILA.

Residues 1 to 25 (MDTGNWSQVAEFIILGFPHLQGVQI) lie on the Extracellular side of the membrane. Residue asparagine 5 is glycosylated (N-linked (GlcNAc...) asparagine). Residues 26 to 46 (YLFLLLLLIYLMTVLGNLLIF) form a helical membrane-spanning segment. The Cytoplasmic segment spans residues 47–54 (LVVCLDSR). The helical transmembrane segment at 55–75 (LHTPMYHFVSILSFSELGYTA) threads the bilayer. Residues 76 to 99 (ATIPKMLANLLSEKKTISFSGCLL) lie on the Extracellular side of the membrane. An intrachain disulfide couples cysteine 97 to cysteine 189. Residues 100–120 (QIYFFHSLGATECYLLTAMAY) form a helical membrane-spanning segment. The Cytoplasmic portion of the chain corresponds to 121-139 (DRYLAICRPLHYPTLMTPT). The helical transmembrane segment at 140–160 (LCAEIAIGCWLGGLAGPVVEI) threads the bilayer. At 161 to 197 (SLISRLPFCGPNRIQHVFCDFPPVLSLACTDTSINVL) the chain is on the extracellular side. Residues 198-217 (VDFVINSCKILATFLLILCS) form a helical membrane-spanning segment. Residues 218–237 (YVQIICTVLRIPSAAGKRKA) are Cytoplasmic-facing. A helical membrane pass occupies residues 238 to 258 (ISTCASHFTVVLIFYGSILSM). At 259–271 (YVQLKKSYSLDYD) the chain is on the extracellular side. Residues 272–292 (QALAVVYSVLTPFLNPFIYSL) traverse the membrane as a helical segment. Topologically, residues 293–312 (RNKEIKEAVRRQLKRIGILA) are cytoplasmic.

This sequence belongs to the G-protein coupled receptor 1 family.

Its subcellular location is the cell membrane. In terms of biological role, odorant receptor. The polypeptide is Olfactory receptor 6N1 (OR6N1) (Homo sapiens (Human)).